A 47-amino-acid chain; its full sequence is Defensin-like protein 1 (47 aa).

Disulfide bonds link C5–C47, C16–C36, C22–C43, and C26–C45.

This sequence belongs to the DEFL family.

Fabatins have antibacterial activity against Gram-positive and Gram-negative bacteria. High activity against P.aeruginosa. No activity against S.cerevisiae and C.albicans. In Vicia faba (Broad bean), this protein is Defensin-like protein 1.